The sequence spans 365 residues: Terpene cyclase 4 (365 aa).

Over residues 1 to 11 (MVPSLITPPPS) the composition is skewed to pro residues. The tract at residues 1-20 (MVPSLITPPPSRSGEATPQK) is disordered. Mg(2+) contacts are provided by D118, N260, and S264. The D(D/E)XX(D/E) motif motif lies at 118–122 (DDPFD). The NSE motif motif lies at 260–268 (NDLCSYRKD). Positions 341 to 348 (WSLYTFRY) match the WxxxxxRY motif motif. (2E,6E)-farnesyl diphosphate is bound by residues R347 and Y348.

This sequence belongs to the terpene synthase family. Homodimer. Mg(2+) is required as a cofactor.

The enzyme catalyses (2E,6E)-farnesyl diphosphate + H2O = koraiol + diphosphate. It functions in the pathway sesquiterpene biosynthesis. Terpene cyclase that catalyzes the cyclization of farnesyl diphosphate (FPP) to the sesquiterpene koraiol. This chain is Terpene cyclase 4, found in Gibberella fujikuroi (strain CBS 195.34 / IMI 58289 / NRRL A-6831) (Bakanae and foot rot disease fungus).